We begin with the raw amino-acid sequence, 367 residues long: Glutamate 5-kinase (367 aa).

Lys-10 contributes to the ATP binding site. Residues Ser-50, Asp-137, and Asn-149 each contribute to the substrate site. ATP contacts are provided by residues 169–170 (TD) and 211–217 (TGGMSTK). The PUA domain occupies 275–353 (AGEITVDDGA…QQIAEILGYE (79 aa)).

This sequence belongs to the glutamate 5-kinase family.

The protein localises to the cytoplasm. It carries out the reaction L-glutamate + ATP = L-glutamyl 5-phosphate + ADP. The protein operates within amino-acid biosynthesis; L-proline biosynthesis; L-glutamate 5-semialdehyde from L-glutamate: step 1/2. Its function is as follows. Catalyzes the transfer of a phosphate group to glutamate to form L-glutamate 5-phosphate. In Pectobacterium carotovorum subsp. carotovorum (strain PC1), this protein is Glutamate 5-kinase.